Here is a 444-residue protein sequence, read N- to C-terminus: Type VII secretion system protein EssB (444 aa).

At 1 to 229 the chain is on the cytoplasmic side; that stretch reads MVKNHDPKNE…RKVGHTVFKW (229 aa). The chain crosses the membrane as a helical span at residues 230–250; that stretch reads VAIGMTTLSVLLIAFLAFLYF. Residues 251–444 lie on the Extracellular side of the membrane; sequence SVMKHNERIE…EKRQEAERKK (194 aa). Positions 366 to 444 are disordered; the sequence is KNNGDLSNDK…EKRQEAERKK (79 aa). Positions 372-444 are enriched in basic and acidic residues; sequence SNDKRSEETK…EKRQEAERKK (73 aa). Positions 387–443 form a coiled coil; that stretch reads LQDILDKEKQVKDEKAKSEEEKAKAKDEKLKQQEENEKKQKEQAQKDKEKRQEAERK.

The protein belongs to the EssB family.

The protein localises to the cell membrane. Component of the type VII secretion system (Ess). Required for the secretion of EsxA. The chain is Type VII secretion system protein EssB from Staphylococcus aureus (strain MRSA252).